The following is a 503-amino-acid chain: MRPVLVVDFGSQYSQLVVRAIRECGYYAEFASPSISAAECLALSPIAIFLSGGPASAYKDNAPKLDEEIFNCGIPIFGICYGFQLLAQAFGGSVKKANAPEYGPADITIVNKAFFSGQPDRQTVWMSHGDSVIRAPKNFCILSTSQDAVLSFCNRDRTIAGVQWHPEVKHSRFGKHTIKAFLSSFAAPNWDPEQTICGTVDSIRKTVGCKRVLCALSGGVDSVVAATLTHRAIGDRLRCVFVDHGLLRLNEREQVEEYCSSLGLNVSTYDASDCFLSALSGIRDSEQKRKVIGREFIACFSKLQERFDIKPHFLLQGTLYPDLVESGATPGGATIKSHHNVGGLSDNLGFELLEPLKYLFKDEVRKIGLQLGIPKHIVHRQPFPGPGLAIRIIGEVTNKKLSILRAADAIVRHELRDWTDIWQCPVILLSDVQSVGVRGDSRSCGFPIVIRPVSSDDAMTADWYRLPYDVLARISGRITNEIPEIVRVVLDITPKPPATIEWE.

Residues Pro3–Asn189 form the Glutamine amidotransferase type-1 domain. The active-site Nucleophile is the Cys80. Active-site residues include His165 and Glu167. A GMPS ATP-PPase domain is found at Trp190 to Arg380. Residue Ser217 to Val223 participates in ATP binding.

In terms of assembly, homodimer.

It carries out the reaction XMP + L-glutamine + ATP + H2O = GMP + L-glutamate + AMP + diphosphate + 2 H(+). It functions in the pathway purine metabolism; GMP biosynthesis; GMP from XMP (L-Gln route): step 1/1. In terms of biological role, catalyzes the synthesis of GMP from XMP. The polypeptide is GMP synthase [glutamine-hydrolyzing] (Tropheryma whipplei (strain TW08/27) (Whipple's bacillus)).